Here is a 358-residue protein sequence, read N- to C-terminus: DNA polymerase IV (358 aa).

One can recognise a UmuC domain in the interval 4–185 (IIHVDMDCFY…LPLIKIPGVG (182 aa)). Mg(2+)-binding residues include aspartate 8 and aspartate 103. Glutamate 104 is an active-site residue.

This sequence belongs to the DNA polymerase type-Y family. Monomer. Mg(2+) serves as cofactor.

The protein resides in the cytoplasm. The catalysed reaction is DNA(n) + a 2'-deoxyribonucleoside 5'-triphosphate = DNA(n+1) + diphosphate. Functionally, poorly processive, error-prone DNA polymerase involved in untargeted mutagenesis. Copies undamaged DNA at stalled replication forks, which arise in vivo from mismatched or misaligned primer ends. These misaligned primers can be extended by PolIV. Exhibits no 3'-5' exonuclease (proofreading) activity. May be involved in translesional synthesis, in conjunction with the beta clamp from PolIII. In Shewanella pealeana (strain ATCC 700345 / ANG-SQ1), this protein is DNA polymerase IV.